The following is a 189-amino-acid chain: GMP synthase [glutamine-hydrolyzing] subunit A (189 aa).

The 189-residue stretch at 1-189 (MIVILNNGGQ…CKKCGFEFEE (189 aa)) folds into the Glutamine amidotransferase type-1 domain. Cys76 functions as the Nucleophile in the catalytic mechanism. Active-site residues include His163 and Glu165.

In terms of assembly, heterodimer composed of a glutamine amidotransferase subunit (A) and a GMP-binding subunit (B).

It carries out the reaction XMP + L-glutamine + ATP + H2O = GMP + L-glutamate + AMP + diphosphate + 2 H(+). The protein operates within purine metabolism; GMP biosynthesis; GMP from XMP (L-Gln route): step 1/1. Catalyzes the synthesis of GMP from XMP. This chain is GMP synthase [glutamine-hydrolyzing] subunit A, found in Methanococcus maripaludis (strain C6 / ATCC BAA-1332).